Consider the following 363-residue polypeptide: UDP-N-acetylglucosamine--N-acetylmuramyl-(pentapeptide) pyrophosphoryl-undecaprenol N-acetylglucosamine transferase (363 aa).

Residues threonine 10–glycine 12, asparagine 124, serine 195, isoleucine 250, and glutamine 295 each bind UDP-N-acetyl-alpha-D-glucosamine.

Belongs to the glycosyltransferase 28 family. MurG subfamily.

It is found in the cell membrane. It catalyses the reaction di-trans,octa-cis-undecaprenyl diphospho-N-acetyl-alpha-D-muramoyl-L-alanyl-D-glutamyl-meso-2,6-diaminopimeloyl-D-alanyl-D-alanine + UDP-N-acetyl-alpha-D-glucosamine = di-trans,octa-cis-undecaprenyl diphospho-[N-acetyl-alpha-D-glucosaminyl-(1-&gt;4)]-N-acetyl-alpha-D-muramoyl-L-alanyl-D-glutamyl-meso-2,6-diaminopimeloyl-D-alanyl-D-alanine + UDP + H(+). It functions in the pathway cell wall biogenesis; peptidoglycan biosynthesis. Its function is as follows. Cell wall formation. Catalyzes the transfer of a GlcNAc subunit on undecaprenyl-pyrophosphoryl-MurNAc-pentapeptide (lipid intermediate I) to form undecaprenyl-pyrophosphoryl-MurNAc-(pentapeptide)GlcNAc (lipid intermediate II). The polypeptide is UDP-N-acetylglucosamine--N-acetylmuramyl-(pentapeptide) pyrophosphoryl-undecaprenol N-acetylglucosamine transferase (Listeria monocytogenes serovar 1/2a (strain ATCC BAA-679 / EGD-e)).